Consider the following 110-residue polypeptide: Transmembrane protein 233 (110 aa).

A disordered region spans residues 1-32 (MSQYASRSDSKGALDSSSPEAYTEDDKTEEDI). Topologically, residues 1-42 (MSQYASRSDSKGALDSSSPEAYTEDDKTEEDIPAPSNYLWLT) are cytoplasmic. Positions 22 to 32 (YTEDDKTEEDI) are enriched in acidic residues. Residues 43 to 63 (IISCFCPAYPVNIVALVFSIM) constitute an intramembrane region (helical). At 64–85 (SLNSYNDGDYEGARRLGRNAKW) the chain is on the cytoplasmic side. The helical transmembrane segment at 86-106 (VAIASIIIGLVIIGVSCAVHF) threads the bilayer. Topologically, residues 107–110 (SRNP) are extracellular.

This sequence belongs to the CD225/Dispanin family. Interacts with the giant stinging tree toxin ExTxA (P0DQP3). Interacts with Nav1.7/SCN9A. Interacts with Nav1.1/SCN1A, Nav1.2/SCN2A, Nav1.3/SCN3A, Nav1.4/SCN4A, Nav1.5/SCN5A, and Nav1.6/SCN8A. In terms of tissue distribution, probably expressed in nociceptive neurons. Detected in dorsal root ganglion neurons.

The protein resides in the membrane. In terms of biological role, probable accessory protein of voltage-gated sodium channels. This is Transmembrane protein 233 from Mus musculus (Mouse).